The primary structure comprises 269 residues: 4-hydroxy-tetrahydrodipicolinate reductase (269 aa).

Position 9–14 (9–14 (GVAGRM)) interacts with NAD(+). Residue R36 coordinates NADP(+). Residues 99-101 (GTT) and 123-126 (APNM) each bind NAD(+). The Proton donor/acceptor role is filled by H156. Position 157 (H157) interacts with (S)-2,3,4,5-tetrahydrodipicolinate. K160 functions as the Proton donor in the catalytic mechanism. 166 to 167 (GT) contributes to the (S)-2,3,4,5-tetrahydrodipicolinate binding site.

Belongs to the DapB family.

The protein localises to the cytoplasm. It catalyses the reaction (S)-2,3,4,5-tetrahydrodipicolinate + NAD(+) + H2O = (2S,4S)-4-hydroxy-2,3,4,5-tetrahydrodipicolinate + NADH + H(+). The enzyme catalyses (S)-2,3,4,5-tetrahydrodipicolinate + NADP(+) + H2O = (2S,4S)-4-hydroxy-2,3,4,5-tetrahydrodipicolinate + NADPH + H(+). The protein operates within amino-acid biosynthesis; L-lysine biosynthesis via DAP pathway; (S)-tetrahydrodipicolinate from L-aspartate: step 4/4. Functionally, catalyzes the conversion of 4-hydroxy-tetrahydrodipicolinate (HTPA) to tetrahydrodipicolinate. This chain is 4-hydroxy-tetrahydrodipicolinate reductase, found in Methylococcus capsulatus (strain ATCC 33009 / NCIMB 11132 / Bath).